A 71-amino-acid chain; its full sequence is UPF0346 protein BCE_2336 (71 aa).

It belongs to the UPF0346 family.

This is UPF0346 protein BCE_2336 from Bacillus cereus (strain ATCC 10987 / NRS 248).